We begin with the raw amino-acid sequence, 123 residues long: Venom peptide MmKTx1 (123 aa).

A signal peptide spans 1–21; sequence MSIKISAIALFMLSFTVFVNG.

It belongs to the scorpion La1-like peptide family. In terms of processing, contains 4 disulfide bonds. In terms of tissue distribution, expressed by the venom gland.

It localises to the secreted. This chain is Venom peptide MmKTx1, found in Olivierus martensii (Manchurian scorpion).